We begin with the raw amino-acid sequence, 696 residues long: Polyribonucleotide nucleotidyltransferase (696 aa).

Residues aspartate 483 and aspartate 489 each coordinate Mg(2+). The KH domain occupies 550-609; it reads PRITTIYVKTDKIRDVIGSGGKNIRGITEATGVTIDIDDTGKINIASTDKAACDMAIKMI. The S1 motif domain occupies 619-687; the sequence is GKLYMGLVKK…KQGKIKLSRK (69 aa).

Belongs to the polyribonucleotide nucleotidyltransferase family. Mg(2+) serves as cofactor.

The protein resides in the cytoplasm. The catalysed reaction is RNA(n+1) + phosphate = RNA(n) + a ribonucleoside 5'-diphosphate. Its function is as follows. Involved in mRNA degradation. Catalyzes the phosphorolysis of single-stranded polyribonucleotides processively in the 3'- to 5'-direction. The sequence is that of Polyribonucleotide nucleotidyltransferase from Geotalea daltonii (strain DSM 22248 / JCM 15807 / FRC-32) (Geobacter daltonii).